A 152-amino-acid chain; its full sequence is 3-hydroxyacyl-[acyl-carrier-protein] dehydratase FabZ (152 aa).

Residue histidine 57 is part of the active site.

The protein belongs to the thioester dehydratase family. FabZ subfamily.

The protein resides in the cytoplasm. It catalyses the reaction a (3R)-hydroxyacyl-[ACP] = a (2E)-enoyl-[ACP] + H2O. Its function is as follows. Involved in unsaturated fatty acids biosynthesis. Catalyzes the dehydration of short chain beta-hydroxyacyl-ACPs and long chain saturated and unsaturated beta-hydroxyacyl-ACPs. This Pasteurella multocida (strain Pm70) protein is 3-hydroxyacyl-[acyl-carrier-protein] dehydratase FabZ.